Here is a 313-residue protein sequence, read N- to C-terminus: Small glutamine-rich tetratricopeptide repeat-containing protein alpha (313 aa).

The tract at residues 66–100 is disordered; it reads ATGKEMPQDLRSPARTPPSEEDSAEAERLKTEGNE. Residue Ser-77 is modified to Phosphoserine. Thr-81 carries the phosphothreonine modification. Phosphoserine is present on Ser-84. The span at 90 to 100 shows a compositional bias: basic and acidic residues; that stretch reads EAERLKTEGNE. TPR repeat units lie at residues 91-124, 125-158, and 159-192; these read AERL…NPAN, AVYF…DPAY, and SKAY…DPDN. Lys-137 is subject to N6-acetyllysine. The interval 250–269 is disordered; that stretch reads MISGGNNPLGTPGTSPSQND. Ser-301 carries the post-translational modification Phosphoserine. Thr-303 is subject to Phosphothreonine. Residue Ser-305 is modified to Phosphoserine.

The protein belongs to the SGT family. Homodimer. Homooligomer. Interacts with DNAJC5 and DNAJC5B. Interacts (via TPR repeats) with HSP90AA1. Interacts (via Gln-rich region) with SLC2A1. Interacts with HSP90AB1. Interacts (via TPR repeats) with HSPA8/Hsc70; the interaction is direct. Interacts with BAG6 (via ubiquitin-like domain); interaction prevents interaction between BAG6 and RNF126. Forms a multiprotein complex, at least composed of DNAJB12, DNAJB14, HSPA8/Hsc70 and SGTA; interaction with DNAJB14 and HSPA8/Hsc70 is direct. In terms of assembly, (Microbial infection) Interacts with Vpu and Gag from HIV-1. As to quaternary structure, (Microbial infection) Interacts with SARS-CoV accessory protein 7a. As to expression, ubiquitous.

It is found in the cytoplasm. The protein localises to the nucleus. In terms of biological role, co-chaperone that binds misfolded and hydrophobic patches-containing client proteins in the cytosol. Mediates their targeting to the endoplasmic reticulum but also regulates their sorting to the proteasome when targeting fails. Functions in tail-anchored/type II transmembrane proteins membrane insertion constituting with ASNA1 and the BAG6 complex a targeting module. Functions upstream of the BAG6 complex and ASNA1, binding more rapidly the transmembrane domain of newly synthesized proteins. It is also involved in the regulation of the endoplasmic reticulum-associated misfolded protein catabolic process via its interaction with BAG6: collaborates with the BAG6 complex to maintain hydrophobic substrates in non-ubiquitinated states. Competes with RNF126 for interaction with BAG6, preventing the ubiquitination of client proteins associated with the BAG6 complex. Binds directly to HSC70 and HSP70 and regulates their ATPase activity. Its function is as follows. (Microbial infection) In case of infection by polyomavirus, involved in the virus endoplasmic reticulum membrane penetration and infection via interaction with DNAJB12, DNAJB14 and HSPA8/Hsc70. This chain is Small glutamine-rich tetratricopeptide repeat-containing protein alpha (SGTA), found in Homo sapiens (Human).